The sequence spans 299 residues: 5-azacytidine resistance protein azr1 (299 aa).

Residues Lys35 to Ile293 form the PPM-type phosphatase domain.

Its function is as follows. Confers azacytidine resistance in high copy. The chain is 5-azacytidine resistance protein azr1 (azr1) from Schizosaccharomyces pombe (strain 972 / ATCC 24843) (Fission yeast).